The following is an 894-amino-acid chain: Valine--tRNA ligase (894 aa).

A compositionally biased stretch (polar residues) spans 1–22 (MKSIQTPSKSHTNTKETPVMSQ). The disordered stretch occupies residues 1 to 28 (MKSIQTPSKSHTNTKETPVMSQEETKGY). A 'HIGH' region motif is present at residues 69–79 (PNVTGSLHIGH). Positions 554 to 558 (KMSKS) match the 'KMSKS' region motif. Lys-557 is a binding site for ATP. The stretch at 832 to 894 (IISRLEKQQE…VKVELQGIKG (63 aa)) forms a coiled coil.

The protein belongs to the class-I aminoacyl-tRNA synthetase family. ValS type 1 subfamily. As to quaternary structure, monomer.

Its subcellular location is the cytoplasm. It catalyses the reaction tRNA(Val) + L-valine + ATP = L-valyl-tRNA(Val) + AMP + diphosphate. Catalyzes the attachment of valine to tRNA(Val). As ValRS can inadvertently accommodate and process structurally similar amino acids such as threonine, to avoid such errors, it has a 'posttransfer' editing activity that hydrolyzes mischarged Thr-tRNA(Val) in a tRNA-dependent manner. This chain is Valine--tRNA ligase, found in Wolinella succinogenes (strain ATCC 29543 / DSM 1740 / CCUG 13145 / JCM 31913 / LMG 7466 / NCTC 11488 / FDC 602W) (Vibrio succinogenes).